The chain runs to 373 residues: MSESGFFLDAVGLSVGDIVALTGATPRDGADLSRAISDLAPLDRAGIADLSFIAETKYAGVLAATQAGAVLTTERFAHLAPESVAVLRIAKPYEAFVAVARRLYPSALRPTSLFGTLGVAPGAVVHPSAKLAAGVTVDPGAVIGPRAEIGKGSLIGANAVIGPHVKIGADCAIGAGCTVTHSEIGDRVIVHPGSQIGQDGFGYISSANGHTKVPQIGRVVIHDDVEIGAGSNIDRGGMRDTVIGQGTKIDNLCQIGHNCVIGRHCIIVAQSGLSGSVTVEDFAVLGARTGVIPHITIGKGAMLASRSTVYSNVPAGAVWGGFPAQSKRQWMREVVALRQLAARDHDGRTAASAEAAAPSSDATGVDQPDQAAS.

Residue H257 is the Proton acceptor of the active site. A disordered region spans residues D346–S373. Residues A350–A362 are compositionally biased toward low complexity.

The protein belongs to the transferase hexapeptide repeat family. LpxD subfamily. As to quaternary structure, homotrimer.

The enzyme catalyses a UDP-3-O-[(3R)-3-hydroxyacyl]-alpha-D-glucosamine + a (3R)-hydroxyacyl-[ACP] = a UDP-2-N,3-O-bis[(3R)-3-hydroxyacyl]-alpha-D-glucosamine + holo-[ACP] + H(+). Its pathway is bacterial outer membrane biogenesis; LPS lipid A biosynthesis. Catalyzes the N-acylation of UDP-3-O-acylglucosamine using 3-hydroxyacyl-ACP as the acyl donor. Is involved in the biosynthesis of lipid A, a phosphorylated glycolipid that anchors the lipopolysaccharide to the outer membrane of the cell. This Rhodopseudomonas palustris (strain BisB18) protein is UDP-3-O-acylglucosamine N-acyltransferase 2.